Consider the following 672-residue polypeptide: Putative sodium/calcium exchanger 7 (672 aa).

Positions Met1 to Ala23 are cleaved as a signal peptide. A run of 12 helical transmembrane segments spans residues Val88–Ala108, Val130–Ala150, Leu164–Leu184, Ile196–Tyr216, Leu221–Ala241, Leu451–Leu471, Pro479–Phe499, Ile522–Val542, Gly551–Val571, Ala581–Ile601, Leu620–Phe640, and Val649–Leu669.

Belongs to the Ca(2+):cation antiporter (CaCA) (TC 2.A.19) family.

The protein resides in the membrane. The protein is Putative sodium/calcium exchanger 7 (ncx-7) of Caenorhabditis elegans.